We begin with the raw amino-acid sequence, 191 residues long: MLLLLKQSELNDALKILKSQGVIAYPTESVFGLGCDPDCEAAIQKILLLKQRPAYKGLILIAASIEQLEKYADFSLLTAAQLTVIKKTWPGPITWIVPSQKNLSKLISGDFESVAVRVTAHPIVRQICLAFDKPIISTSANLSSLEAALSSQQVNKMFKSNTLLNLVIDAPVSGLSTPTQIFHASTGKRLR.

Residues 7 to 191 (QSELNDALKI…FHASTGKRLR (185 aa)) enclose the YrdC-like domain.

The protein belongs to the SUA5 family. TsaC subfamily.

It is found in the cytoplasm. The catalysed reaction is L-threonine + hydrogencarbonate + ATP = L-threonylcarbamoyladenylate + diphosphate + H2O. In terms of biological role, required for the formation of a threonylcarbamoyl group on adenosine at position 37 (t(6)A37) in tRNAs that read codons beginning with adenine. Catalyzes the conversion of L-threonine, HCO(3)(-)/CO(2) and ATP to give threonylcarbamoyl-AMP (TC-AMP) as the acyladenylate intermediate, with the release of diphosphate. This Psychromonas ingrahamii (strain DSM 17664 / CCUG 51855 / 37) protein is Threonylcarbamoyl-AMP synthase.